Reading from the N-terminus, the 266-residue chain is Undecaprenyl-diphosphatase (266 aa).

8 helical membrane-spanning segments follow: residues 1–21 (MDTFQVIILALIQGLTEFLPI), 39–59 (QGLSFDVAVNTGSLFAVVIYF), 87–107 (WWIILATLPAVFFGFIAKDFI), 111–131 (LRSAGVIAVTTIVFGLLLWWA), 149–169 (ALLIGFAQALALIPGTSRSGA), 183–203 (AAARFSFLMSVPVSLGAAILV), 218–238 (ALTLGTVISFVAAYLCIHYFL), and 246–266 (MTPFVIYRLILGAVLCGFIFL).

Belongs to the UppP family.

It is found in the cell inner membrane. It catalyses the reaction di-trans,octa-cis-undecaprenyl diphosphate + H2O = di-trans,octa-cis-undecaprenyl phosphate + phosphate + H(+). Its function is as follows. Catalyzes the dephosphorylation of undecaprenyl diphosphate (UPP). Confers resistance to bacitracin. This is Undecaprenyl-diphosphatase from Shewanella sp. (strain MR-7).